Here is a 112-residue protein sequence, read N- to C-terminus: Nitrogen regulatory protein GlnK2 (112 aa).

ADP-binding positions include threonine 29, glutamine 38 to glutamine 39, valine 64, and glycine 87 to lysine 90. ATP contacts are provided by residues threonine 29, glutamine 38 to glutamine 39, valine 64, glycine 87 to lysine 90, and arginine 101 to arginine 103.

This sequence belongs to the P(II) protein family. Homotrimer. Interacts and forms a complex with Amt2.

Its subcellular location is the cytoplasm. With respect to regulation, binding of adenosine nucleotides results in distinct, cooperative behavior for ATP and ADP. GlnK2 is completely insensitive to 2-oxoglutarate at a low level of intracellular nitrogen. In terms of biological role, involved in the regulation of nitrogen metabolism. Regulates the activity of its targets by protein-protein interaction in response to the nitrogen status of the cell. Regulates the activity of the ammonia channel Amt2 via direct interaction. This chain is Nitrogen regulatory protein GlnK2, found in Archaeoglobus fulgidus (strain ATCC 49558 / DSM 4304 / JCM 9628 / NBRC 100126 / VC-16).